A 910-amino-acid polypeptide reads, in one-letter code: Seizure 6-like protein 2 (910 aa).

Positions 1–27 (MGTPKAQHPPPSQLLLLILLSCAWIEG) are cleaved as a signal peptide. Residues 28–844 (LPLKEDEMMP…DPSRQLEGGN (817 aa)) lie on the Extracellular side of the membrane. Residues 70-152 (PGSDPDPTLA…PLRPEGGEEE (83 aa)) are disordered. Pro residues predominate over residues 123–145 (LTPPPGTTAPPPPGPASPVPPLR). Cys-173 and Cys-202 are disulfide-bonded. Residues 173-286 (CNNNISEGEG…NGFRIHYQAY (114 aa)) enclose the CUB 1 domain. Asn-222 carries an N-linked (GlcNAc...) asparagine glycan. The Sushi 1 domain occupies 288-347 (LSCGFPPRPAHGDVSVTDLHPGGTATFHCDSGYQLQGEETLICLNGTRPAWTGEPPSCTA). Intrachain disulfides connect Cys-290–Cys-330, Cys-316–Cys-345, Cys-349–Cys-376, Cys-464–Cys-508, Cys-491–Cys-523, Cys-527–Cys-553, Cys-644–Cys-686, Cys-672–Cys-699, Cys-705–Cys-747, Cys-733–Cys-764, Cys-771–Cys-813, and Cys-799–Cys-828. Residues Asn-332, Asn-373, Asn-473, and Asn-517 are each glycosylated (N-linked (GlcNAc...) asparagine). The CUB 2 domain occupies 349 to 459 (CGGTIHNATL…LLLSLRFEAF (111 aa)). One can recognise a Sushi 2 domain in the interval 462–525 (DRCFPPFLAH…WNDTEPACKA (64 aa)). The CUB 3 domain occupies 527–638 (CGGELSEPAG…QGFVLHFKEV (112 aa)). 3 Sushi domains span residues 642 to 701 (DTCP…ACQK), 703 to 766 (MTCA…KCAL), and 769 to 830 (EPCL…LCKV). A helical transmembrane segment spans residues 845 to 865 (LALAILLPLGLVIVLGIGVYI). Residues 866-910 (YYTKLQGKSLFGFSGSHSYSPITVESDFSNPLYEAGDTREYEVSI) are Cytoplasmic-facing.

This sequence belongs to the SEZ6 family. Expressed exclusively in the brain, predominantly in the neurons. Wide expression in the gray matter of the brain with high levels in the olfactory bulb, anterior olfactory nuclei, hippocampal formation and cerebellar cortex. Detected diffusely and weakly in the white matter, such as the corpus callosum and cerebellar medulla. In the cerebellar cortex, intensely expressed in Purkinje cells (PC) and granule cells. Detected also in interneurons in the molecular layer. Up-regulated at two weeks after birth.

It localises to the cell membrane. The protein localises to the endoplasmic reticulum membrane. May contribute to specialized endoplasmic reticulum functions in neurons. The polypeptide is Seizure 6-like protein 2 (Sez6l2) (Mus musculus (Mouse)).